The sequence spans 193 residues: MKLLEERILKDGHILGDNILKVDSFLTHQVDFSLMREIGKVFAEKFAAAGITKVVTIEASGIAPAVFTAEALNVPMIFAKKAKNITMNEGILTAQVYSFTKQVTSTVSIAGKFLSPEDKVLIIDDFLANGQAAKGLIQIIEQAGATVQAIGIVIEKSFQDGRDLLEKAGYPVLSLARLDRFENGQVVFKEADL.

2 residues coordinate xanthine: L20 and T27. A128–A132 contacts 5-phospho-alpha-D-ribose 1-diphosphate. K156 provides a ligand contact to xanthine.

This sequence belongs to the purine/pyrimidine phosphoribosyltransferase family. Xpt subfamily. Homodimer.

The protein resides in the cytoplasm. The catalysed reaction is XMP + diphosphate = xanthine + 5-phospho-alpha-D-ribose 1-diphosphate. Its pathway is purine metabolism; XMP biosynthesis via salvage pathway; XMP from xanthine: step 1/1. Its function is as follows. Converts the preformed base xanthine, a product of nucleic acid breakdown, to xanthosine 5'-monophosphate (XMP), so it can be reused for RNA or DNA synthesis. The sequence is that of Xanthine phosphoribosyltransferase from Streptococcus pneumoniae (strain CGSP14).